A 420-amino-acid polypeptide reads, in one-letter code: Ribosome biogenesis protein WDR12 homolog (420 aa).

A ubiquitin-like (UBL) domain region spans residues 10–92 (VQVHLKTKQE…EDAIEIEYVE (83 aa)). 7 WD repeats span residues 104 to 142 (LHDDWVSAVKARGKWILSGCYDNSLNLWTNKGKHILTIS), 143 to 185 (GHTA…NAVD), 192 to 231 (GHERGVDSVSVSPDGLRFATGSWDTMLKVWSAELDDGVEG), 250 to 288 (GHRESVSAVQWMDATTLLTGSWDYTLKVWDLSLEGIKTE), 290 to 329 (STNKSIFDASYSKLNRLILTASADKNLRLYDPRTNQGSVV), 335 to 375 (GHNA…APLY), and 379 to 417 (GHGDKVLDIDWSNPKYIVSGGVDNTVRVFKSRKALAEDT).

This sequence belongs to the WD repeat WDR12/YTM1 family.

It localises to the nucleus. Its subcellular location is the nucleolus. The protein resides in the nucleoplasm. Its function is as follows. Required for maturation of ribosomal RNAs and formation of the large ribosomal subunit. The protein is Ribosome biogenesis protein WDR12 homolog of Drosophila sechellia (Fruit fly).